The following is a 130-amino-acid chain: Small ribosomal subunit protein uS8 (130 aa).

Belongs to the universal ribosomal protein uS8 family. Part of the 30S ribosomal subunit. Contacts proteins S5 and S12.

Its function is as follows. One of the primary rRNA binding proteins, it binds directly to 16S rRNA central domain where it helps coordinate assembly of the platform of the 30S subunit. The protein is Small ribosomal subunit protein uS8 of Photobacterium profundum (strain SS9).